A 221-amino-acid polypeptide reads, in one-letter code: ATP phosphoribosyltransferase (221 aa).

It belongs to the ATP phosphoribosyltransferase family. Short subfamily. Heteromultimer composed of HisG and HisZ subunits.

It is found in the cytoplasm. The catalysed reaction is 1-(5-phospho-beta-D-ribosyl)-ATP + diphosphate = 5-phospho-alpha-D-ribose 1-diphosphate + ATP. Its pathway is amino-acid biosynthesis; L-histidine biosynthesis; L-histidine from 5-phospho-alpha-D-ribose 1-diphosphate: step 1/9. Catalyzes the condensation of ATP and 5-phosphoribose 1-diphosphate to form N'-(5'-phosphoribosyl)-ATP (PR-ATP). Has a crucial role in the pathway because the rate of histidine biosynthesis seems to be controlled primarily by regulation of HisG enzymatic activity. This Neisseria gonorrhoeae (strain ATCC 700825 / FA 1090) protein is ATP phosphoribosyltransferase.